The primary structure comprises 85 residues: Large ribosomal subunit protein bL27 (85 aa).

This sequence belongs to the bacterial ribosomal protein bL27 family.

This chain is Large ribosomal subunit protein bL27, found in Campylobacter hominis (strain ATCC BAA-381 / DSM 21671 / CCUG 45161 / LMG 19568 / NCTC 13146 / CH001A).